We begin with the raw amino-acid sequence, 359 residues long: DNA replication and repair protein RecF (359 aa).

30–37 is a binding site for ATP; the sequence is GPNGSGKT.

It belongs to the RecF family.

It is found in the cytoplasm. The RecF protein is involved in DNA metabolism; it is required for DNA replication and normal SOS inducibility. RecF binds preferentially to single-stranded, linear DNA. It also seems to bind ATP. The sequence is that of DNA replication and repair protein RecF from Aliivibrio fischeri (strain MJ11) (Vibrio fischeri).